A 373-amino-acid polypeptide reads, in one-letter code: Acyl-CoA dehydrogenase FadE27 (373 aa).

Positions 251, 327, and 331 each coordinate FAD.

This sequence belongs to the acyl-CoA dehydrogenase family. Heterotetramer (dimer of heterodimers) composed of FadE26 and FadE27. FAD is required as a cofactor.

It carries out the reaction (25S)-3-oxocholest-4-en-26-oyl-CoA + A = 3-oxo-cholest-4,24-dien-26-oyl-CoA + AH2. The protein operates within steroid metabolism; cholesterol degradation. Uncompetitively inhibited by high concentration of 3-OCS-CoA. In terms of biological role, involved in the first cycle of side chain dehydrogenation in the beta-oxidation of cholesterol catabolism. It contributes partly to the virulence by increasing the efficiency of beta-oxidation. Catalyzes the dehydrogenation of acyl-CoA ester side chains of (25S)-3-oxo-cholest-4-en-26-oyl-CoA (3-OCS-CoA) to yield (24E)-3-oxo-cholest-4,24-dien-26-oyl-CoA. Also able to dehydrogenate steroyl-CoA such as 3-oxo-chol-4-en-24-oyl-CoA (3-OCO-CoA) as well as 3-oxo-4-pregnene-20-carboxyl-CoA (3-OPC-CoA). It dehydrogenates only (25S)-OCS-CoA diastereomer. The polypeptide is Acyl-CoA dehydrogenase FadE27 (fadE27) (Mycobacterium tuberculosis (strain ATCC 25618 / H37Rv)).